Here is a 111-residue protein sequence, read N- to C-terminus: C-type lectin lectoxin-Enh2 (111 aa).

The first 23 residues, 1-23, serve as a signal peptide directing secretion; sequence MGQFTVVSLGLLAMFLSLSGAKG. The cysteines at positions 26 and 37 are disulfide-linked. The 76-residue stretch at 33–108 folds into the C-type lectin domain; it reads RNGVCNKLFP…CASLHPFICQ (76 aa). The short motif at 72 to 74 is the Mannose-binding element; the sequence is EPN. Residues Glu-80, Asn-95, and Asp-96 each contribute to the Ca(2+) site. The cysteines at positions 82 and 99 are disulfide-linked.

The protein belongs to the true venom lectin family. As to expression, expressed by the venom gland.

It localises to the secreted. Functionally, mannose-binding lectin which recognizes specific carbohydrate structures and agglutinates a variety of animal cells by binding to cell-surface glycoproteins and glycolipids. May be a calcium-dependent lectin. This is C-type lectin lectoxin-Enh2 from Pseudoferania polylepis (Macleay's water snake).